The primary structure comprises 470 residues: Fumarate reductase 1 (470 aa).

Position 6 to 20 (6 to 20 (VVVIGTGLAGLAAAN)) interacts with FAD. At Ser66 the chain carries Phosphoserine. Active-site residues include His249 and Arg272.

Belongs to the FAD-dependent oxidoreductase 2 family. FRD/SDH subfamily. The cofactor is FAD. The N-terminus is blocked.

The protein resides in the cytoplasm. The enzyme catalyses succinate + NAD(+) = fumarate + NADH + H(+). Functionally, irreversibly catalyzes the reduction of fumarate to succinate. Together with the second isozyme of soluble fumarate reductase (OSM1), essential for anaerobic growth. Involved in maintaining redox balance. Reduction of fumarate is the main source of succinate during fermentation, and under anaerobic conditions, the formation of succinate is strictly required for the reoxidation of FADH(2). In Saccharomyces cerevisiae (strain ATCC 204508 / S288c) (Baker's yeast), this protein is Fumarate reductase 1 (FRD1).